We begin with the raw amino-acid sequence, 116 residues long: Host cell factor C1 regulator 1 (116 aa).

Positions 1-22 (MILQQPLERGPPGRDPRATTGV) are disordered. The tract at residues 54 to 57 (DHPY) is interaction with HCFC1. The Nuclear export signal motif lies at 88 to 97 (IPEALRLLRL).

In terms of assembly, interacts with HCFC1.

It localises to the cytoplasm. It is found in the nucleus. In terms of biological role, regulates HCFC1 activity by modulating its subcellular localization. Overexpression of HCFC1R1 leads to accumulation of HCFC1 in the cytoplasm. HCFC1R1-mediated export may provide the pool of cytoplasmic HCFC1 required for import of virion-derived VP16 into the nucleus. The sequence is that of Host cell factor C1 regulator 1 (Hcfc1r1) from Rattus norvegicus (Rat).